A 196-amino-acid chain; its full sequence is GTP cyclohydrolase-2 (196 aa).

Residue 49–53 (RVHSE) coordinates GTP. Zn(2+) contacts are provided by cysteine 54, cysteine 65, and cysteine 67. Residues glutamine 70, 92–94 (EGR), and threonine 114 contribute to the GTP site. Aspartate 126 (proton acceptor) is an active-site residue. The active-site Nucleophile is the arginine 128. 2 residues coordinate GTP: threonine 149 and lysine 154.

The protein belongs to the GTP cyclohydrolase II family. Homodimer. The cofactor is Zn(2+).

It carries out the reaction GTP + 4 H2O = 2,5-diamino-6-hydroxy-4-(5-phosphoribosylamino)-pyrimidine + formate + 2 phosphate + 3 H(+). It participates in cofactor biosynthesis; riboflavin biosynthesis; 5-amino-6-(D-ribitylamino)uracil from GTP: step 1/4. Catalyzes the conversion of GTP to 2,5-diamino-6-ribosylamino-4(3H)-pyrimidinone 5'-phosphate (DARP), formate and pyrophosphate. The sequence is that of GTP cyclohydrolase-2 from Yersinia pestis.